The chain runs to 355 residues: C-X-C chemokine receptor type 1 (355 aa).

The Extracellular segment spans residues 1–40; the sequence is MEVNVWNMTDLWTWFEDEFANATGMPPVEKDYSPCLVVTQ. N-linked (GlcNAc...) asparagine glycosylation is found at N7 and N21. The helical transmembrane segment at 41–67 threads the bilayer; it reads TLNKYVVVVIYALVFLLSLLGNSLVML. Residues 68–73 are Cytoplasmic-facing; that stretch reads VILYSR. A helical membrane pass occupies residues 74–92; it reads SNRSVTDVYLLNLAMADLL. Topologically, residues 93-114 are extracellular; sequence FALTMPIWAVSKEKGWIFGTPL. A helical transmembrane segment spans residues 115-138; it reads CKVVSLVKEVNFYSGILLLACISV. An intrachain disulfide couples C115 to C192. Residues 139–159 lie on the Cytoplasmic side of the membrane; sequence DRYLAIVHATRTLTQKRHLVK. Residues 160-184 form a helical membrane-spanning segment; the sequence is FICLGIWALSLILSLPFFLFRQVFS. At 185 to 204 the chain is on the extracellular side; sequence PNNSSPVCYEDLGHNTAKWR. A helical membrane pass occupies residues 205 to 232; it reads MVLRILPHTFGFILPLLVMLFCYGFTLR. At 233-247 the chain is on the cytoplasmic side; that stretch reads TLFQAHMGQKHRAMR. The helical transmembrane segment at 248–270 threads the bilayer; that stretch reads VIFAVVLIFLLCWLPYNLVLLAD. The Extracellular portion of the chain corresponds to 271-290; sequence TLMRTHVIQETCQRRNDIDR. A helical membrane pass occupies residues 291–313; that stretch reads ALDATEILGFLHSCLNPIIYAFI. Residues 314–355 are Cytoplasmic-facing; that stretch reads GQNFRNGFLKMLAARGLISKEFLTRHRVTSYTSSSTNVPSNL.

It belongs to the G-protein coupled receptor 1 family. In terms of assembly, interacts with IL8. Interacts with GNAI2. Neutrophils.

It is found in the cell membrane. Functionally, receptor to interleukin-8, which is a powerful neutrophils chemotactic factor. Binding of IL-8 to the receptor causes activation of neutrophils. This response is mediated via a G-protein that activates a phosphatidylinositol-calcium second messenger system. The polypeptide is C-X-C chemokine receptor type 1 (CXCR1) (Oryctolagus cuniculus (Rabbit)).